A 287-amino-acid polypeptide reads, in one-letter code: uncharacterized protein (287 aa).

One can recognise an ATP-grasp domain in the interval proline 115–isoleucine 287. ATP is bound by residues lysine 145 and glutamine 178–serine 188. The Mg(2+) site is built by aspartate 248, glutamate 261, and asparagine 263. Positions 248, 261, and 263 each coordinate Mn(2+).

This sequence belongs to the RimK family.

This is an uncharacterized protein from Mycoplasma genitalium (strain ATCC 33530 / DSM 19775 / NCTC 10195 / G37) (Mycoplasmoides genitalium).